Here is a 218-residue protein sequence, read N- to C-terminus: Glutathione S-transferase Mu 2 (218 aa).

In terms of domain architecture, GST N-terminal spans 2 to 88 (PMTLGYWDIR…YLGRKHNLCG (87 aa)). 7–8 (YW) is a glutathione binding site. Ser27 and Ser44 each carry phosphoserine. Residues 43–46 (RSQW), Lys50, 59–60 (NL), and 72–73 (QS) contribute to the glutathione site. One can recognise a GST C-terminal domain in the interval 90 to 214 (TEEERIRVDV…SKPIFAKMAF (125 aa)). A substrate-binding site is contributed by Tyr116. Ser117 is modified (phosphoserine).

It belongs to the GST superfamily. Mu family. Homodimer or heterodimer.

The protein resides in the cytoplasm. It carries out the reaction RX + glutathione = an S-substituted glutathione + a halide anion + H(+). The enzyme catalyses 11(S)-hydroxy-14(S),15(S)-epoxy-(5Z,8Z,12E)-eicosatrienoate + glutathione = (11S,15S)-dihydroxy-14(R)-S-glutathionyl-(5Z,8Z,12E)-eicosatrienoate. Its function is as follows. Conjugation of reduced glutathione to a wide number of exogenous and endogenous hydrophobic electrophiles. Participates in the formation of novel hepoxilin regioisomers. This chain is Glutathione S-transferase Mu 2, found in Rattus norvegicus (Rat).